Here is a 508-residue protein sequence, read N- to C-terminus: Cytochrome P450 monooxygenase lepD (508 aa).

A helical membrane pass occupies residues 22-42 (IAAAVAVVASIVIYLALSSFF). 2 N-linked (GlcNAc...) asparagine glycosylation sites follow: Asn-53 and Asn-416. Cys-454 is a heme binding site.

Belongs to the cytochrome P450 family. It depends on heme as a cofactor.

The protein localises to the membrane. Its function is as follows. Cytochrome P450 monooxygenase; part of the gene cluster 23 that mediates the biosynthesis of a family of 2-pyridones known as leporins. The hybrid PKS-NRPS synthetase lepA and the enoyl reductase lepG are responsible for fusion of phenylalanine with a hexaketide and subsequent release of the stable tetramic acid precursor, pre-leporin C. Because lepA lacks a designated enoylreductase (ER) domain, the required activity is provided the enoyl reductase lepG. It is possible that the dehydrogenase lepF also participates in production of pre-leporin C. Cytochrome P450 monooxygenase lepH is then required for the ring expansion step to yield leporin C. Leporin C is then presumably further oxidized by the N-hydroxylase lepD to form leporin B. LepI may possess a function in biosynthesis upstream of lepA. Leporin B is further oxidized in the presence of ferric ion to give the leporin B trimer-iron chelate, but whether or not this reaction is catalyzed by an enzyme in the pathway or by ferric ion is not determined yet. This Aspergillus flavus (strain ATCC 200026 / FGSC A1120 / IAM 13836 / NRRL 3357 / JCM 12722 / SRRC 167) protein is Cytochrome P450 monooxygenase lepD.